Consider the following 240-residue polypeptide: Vesicle-associated membrane protein 727 (240 aa).

Over 1–215 (MSQKGLIYSF…MWLQSLQMKL (215 aa)) the chain is Cytoplasmic. The region spanning 6-133 (LIYSFVAKGT…NLDREFGPIL (128 aa)) is the Longin domain. The 61-residue stretch at 149–209 (KLSKLKAQIT…RQLRRKMWLQ (61 aa)) folds into the v-SNARE coiled-coil homology domain. A helical; Anchor for type IV membrane protein transmembrane segment spans residues 216 to 236 (MVAGAVFSFILIVWVVACGGF). Residues 237 to 240 (KCSS) are Vesicular-facing.

The protein belongs to the synaptobrevin family. Interacts with subunits of the class C core vacuole/endosome tethering (CORVET) complex including VPS11, VCL1, VPS18, VPS33, VPS3 and VPS8. Highly expressed in flowers. Detected in leaves, stems and roots.

It localises to the early endosome membrane. The protein resides in the endosome membrane. Involved in the targeting and/or fusion of transport vesicles to their target membrane. The polypeptide is Vesicle-associated membrane protein 727 (VAMP727) (Arabidopsis thaliana (Mouse-ear cress)).